Reading from the N-terminus, the 192-residue chain is Imidazoleglycerol-phosphate dehydratase (192 aa).

The protein belongs to the imidazoleglycerol-phosphate dehydratase family.

Its subcellular location is the cytoplasm. The catalysed reaction is D-erythro-1-(imidazol-4-yl)glycerol 3-phosphate = 3-(imidazol-4-yl)-2-oxopropyl phosphate + H2O. Its pathway is amino-acid biosynthesis; L-histidine biosynthesis; L-histidine from 5-phospho-alpha-D-ribose 1-diphosphate: step 6/9. This is Imidazoleglycerol-phosphate dehydratase from Staphylococcus epidermidis (strain ATCC 12228 / FDA PCI 1200).